Here is a 211-residue protein sequence, read N- to C-terminus: FMN-dependent NADH:quinone oxidoreductase 3 (211 aa).

An FMN-binding site is contributed by 102 to 105; it reads MWNF.

Belongs to the azoreductase type 1 family. Homodimer. FMN is required as a cofactor.

The enzyme catalyses 2 a quinone + NADH + H(+) = 2 a 1,4-benzosemiquinone + NAD(+). It catalyses the reaction N,N-dimethyl-1,4-phenylenediamine + anthranilate + 2 NAD(+) = 2-(4-dimethylaminophenyl)diazenylbenzoate + 2 NADH + 2 H(+). In terms of biological role, quinone reductase that provides resistance to thiol-specific stress caused by electrophilic quinones. Its function is as follows. Also exhibits azoreductase activity. Catalyzes the reductive cleavage of the azo bond in aromatic azo compounds to the corresponding amines. The protein is FMN-dependent NADH:quinone oxidoreductase 3 of Bacillus cereus (strain ATCC 10987 / NRS 248).